The following is a 130-amino-acid chain: Mediator of RNA polymerase II transcription subunit 31 (130 aa).

Belongs to the Mediator complex subunit 31 family. Component of the Mediator complex.

The protein localises to the nucleus. Component of the Mediator complex, a coactivator involved in the regulated transcription of nearly all RNA polymerase II-dependent genes. Mediator functions as a bridge to convey information from gene-specific regulatory proteins to the basal RNA polymerase II transcription machinery. Mediator is recruited to promoters by direct interactions with regulatory proteins and serves as a scaffold for the assembly of a functional preinitiation complex with RNA polymerase II and the general transcription factors. The chain is Mediator of RNA polymerase II transcription subunit 31 (SOH1) from Candida glabrata (strain ATCC 2001 / BCRC 20586 / JCM 3761 / NBRC 0622 / NRRL Y-65 / CBS 138) (Yeast).